The sequence spans 96 residues: Putative protein p29 (96 aa).

The chain is Putative protein p29 (29) from Acyrthosiphon pisum secondary endosymbiont phage 1 (Bacteriophage APSE-1).